A 308-amino-acid chain; its full sequence is D-alanine--D-alanine ligase (308 aa).

The region spanning 105–302 (KAIFKALGLD…FPELCERILD (198 aa)) is the ATP-grasp domain. 133 to 188 (DLPFGVPCVVKPAGEGSSVGVQIVKDAARLADACREAARYKGDVVVERYVKGTEVN) lines the ATP pocket. Mg(2+)-binding residues include D256, E269, and N271.

It belongs to the D-alanine--D-alanine ligase family. It depends on Mg(2+) as a cofactor. Requires Mn(2+) as cofactor.

It is found in the cytoplasm. The catalysed reaction is 2 D-alanine + ATP = D-alanyl-D-alanine + ADP + phosphate + H(+). Its pathway is cell wall biogenesis; peptidoglycan biosynthesis. Cell wall formation. This chain is D-alanine--D-alanine ligase, found in Anaeromyxobacter sp. (strain Fw109-5).